Reading from the N-terminus, the 433-residue chain is PC-esterase domain-containing protein 1B (433 aa).

The interval 386-433 (PPCHQRQAPVVHRGFPRHFARGPYSNPWRDRPRRPPKHSPAGLESRPQ) is disordered.

Belongs to the PC-esterase family.

This Mus musculus (Mouse) protein is PC-esterase domain-containing protein 1B (Pced1b).